Consider the following 270-residue polypeptide: Formamidopyrimidine-DNA glycosylase (270 aa).

The Schiff-base intermediate with DNA role is filled by P2. The Proton donor role is filled by E3. The Proton donor; for beta-elimination activity role is filled by K59. H91, R110, and K151 together coordinate DNA. The segment at 236–270 (RVYGRDKEPCVTCGQQVKSKVLGGRNTFWCSRCQK) adopts an FPG-type zinc-finger fold. R260 functions as the Proton donor; for delta-elimination activity in the catalytic mechanism.

It belongs to the FPG family. In terms of assembly, monomer. The cofactor is Zn(2+).

It carries out the reaction Hydrolysis of DNA containing ring-opened 7-methylguanine residues, releasing 2,6-diamino-4-hydroxy-5-(N-methyl)formamidopyrimidine.. The enzyme catalyses 2'-deoxyribonucleotide-(2'-deoxyribose 5'-phosphate)-2'-deoxyribonucleotide-DNA = a 3'-end 2'-deoxyribonucleotide-(2,3-dehydro-2,3-deoxyribose 5'-phosphate)-DNA + a 5'-end 5'-phospho-2'-deoxyribonucleoside-DNA + H(+). Involved in base excision repair of DNA damaged by oxidation or by mutagenic agents. Acts as a DNA glycosylase that recognizes and removes damaged bases. Has a preference for oxidized purines, such as 7,8-dihydro-8-oxoguanine (8-oxoG). Has AP (apurinic/apyrimidinic) lyase activity and introduces nicks in the DNA strand. Cleaves the DNA backbone by beta-delta elimination to generate a single-strand break at the site of the removed base with both 3'- and 5'-phosphates. This chain is Formamidopyrimidine-DNA glycosylase, found in Bdellovibrio bacteriovorus (strain ATCC 15356 / DSM 50701 / NCIMB 9529 / HD100).